Consider the following 174-residue polypeptide: Protein GrpE (174 aa).

A disordered region spans residues 1–35 (MAQDIKNEEVEEVQEEEVVETAEETTPEKSELDLA). Acidic residues predominate over residues 9–25 (EVEEVQEEEVVETAEET). A compositionally biased stretch (basic and acidic residues) spans 26 to 35 (TPEKSELDLA).

It belongs to the GrpE family. As to quaternary structure, homodimer.

It localises to the cytoplasm. Participates actively in the response to hyperosmotic and heat shock by preventing the aggregation of stress-denatured proteins, in association with DnaK and GrpE. It is the nucleotide exchange factor for DnaK and may function as a thermosensor. Unfolded proteins bind initially to DnaJ; upon interaction with the DnaJ-bound protein, DnaK hydrolyzes its bound ATP, resulting in the formation of a stable complex. GrpE releases ADP from DnaK; ATP binding to DnaK triggers the release of the substrate protein, thus completing the reaction cycle. Several rounds of ATP-dependent interactions between DnaJ, DnaK and GrpE are required for fully efficient folding. The protein is Protein GrpE of Streptococcus pneumoniae (strain ATCC BAA-255 / R6).